Reading from the N-terminus, the 158-residue chain is Transcription elongation factor GreA (158 aa).

Residues 53-73 (EQQSFVEGRIQEIEGKLSNAQ) are a coiled coil.

The protein belongs to the GreA/GreB family.

Necessary for efficient RNA polymerase transcription elongation past template-encoded arresting sites. The arresting sites in DNA have the property of trapping a certain fraction of elongating RNA polymerases that pass through, resulting in locked ternary complexes. Cleavage of the nascent transcript by cleavage factors such as GreA or GreB allows the resumption of elongation from the new 3'terminus. GreA releases sequences of 2 to 3 nucleotides. This chain is Transcription elongation factor GreA, found in Alkalilimnicola ehrlichii (strain ATCC BAA-1101 / DSM 17681 / MLHE-1).